We begin with the raw amino-acid sequence, 345 residues long: Short-wave-sensitive opsin 1 (345 aa).

Topologically, residues 1–30 (MSEEEFYLFKNISSVGPWDGPQYHIAPVWA) are extracellular. Residue asparagine 11 is glycosylated (N-linked (GlcNAc...) asparagine). The chain crosses the membrane as a helical span at residues 31-55 (FYLQAAFMGTVFLIGFPLNAMVLVA). Residues 56–67 (TLRYKKLRQPLN) are Cytoplasmic-facing. A helical membrane pass occupies residues 68–93 (YILVNVSFGGFLLCIFSVFPVFVASC). Topologically, residues 94–107 (NGYFVFGRHVCALE) are extracellular. Cysteine 104 and cysteine 181 are joined by a disulfide. The chain crosses the membrane as a helical span at residues 108-127 (GFLGTVAGLVTGWSLAFLAF). At 128-146 (ERYIVICKPFGNFRFSSKH) the chain is on the cytoplasmic side. The helical transmembrane segment at 147–170 (ALTVVLATWTIGIGVSIPPFFGWS) threads the bilayer. The Extracellular portion of the chain corresponds to 171–196 (RFIPEGLQCSCGPDWYTVGTKYRSES). A helical membrane pass occupies residues 197–224 (YTWFLFIFCFIVPLSLICFSYTQLLRAL). Residues 225 to 246 (KAVAAQQQESATTQKAEREVSR) are Cytoplasmic-facing. A helical membrane pass occupies residues 247-270 (MVVVMVGSFCVCYVPYAAFAMYMV). Residues 271 to 278 (NNRNHGLD) are Extracellular-facing. A helical transmembrane segment spans residues 279-303 (LRLVTIPSFFSKSACIYNPIIYCFM). Residue lysine 290 is modified to N6-(retinylidene)lysine. The Cytoplasmic segment spans residues 304 to 345 (NKQFQACIMKMVCGKAMTDESDTCSSQKTEVSTVSSTQVGPN).

Belongs to the G-protein coupled receptor 1 family. Opsin subfamily. Post-translationally, phosphorylated on some or all of the serine and threonine residues present in the C-terminal region. As to expression, the three color pigments are found in the cone photoreceptor cells. Expressed throughout the epidermis and dermis, primarily in the stratum granulosum in the facial and abdominal skin (at protein level). Expressed in dermal fibroblasts (at protein level). Expressed in melanocytes (at protein level).

It is found in the cell membrane. Its subcellular location is the photoreceptor inner segment. It localises to the cell projection. The protein resides in the cilium. The protein localises to the photoreceptor outer segment. It is found in the cytoplasm. Its subcellular location is the perinuclear region. In terms of biological role, visual pigments are the light-absorbing molecules that mediate vision. They consist of an apoprotein, opsin, covalently linked to cis-retinal. Required for the maintenance of cone outer segment organization in the ventral retina, but not essential for the maintenance of functioning cone photoreceptors. Involved in ensuring correct abundance and localization of retinal membrane proteins. May increase spectral sensitivity in dim light. This Homo sapiens (Human) protein is Short-wave-sensitive opsin 1 (OPN1SW).